Reading from the N-terminus, the 308-residue chain is Folate transporter 1, chloroplastic (308 aa).

3 Solcar repeats span residues 4–94 (SWQW…AKQR), 104–192 (LSPA…LRKI), and 213–299 (ADYA…VLKL). The next 6 helical transmembrane spans lie at 10–30 (ATAGAVAGFATVAAMHSLDVV), 74–91 (VIGSTVSWGLYFFFYGRA), 110–130 (LASAAEAGALVCLCTNPIWLV), 164–184 (ALYKGIVPGLVLVSHGAIQFT), 216–236 (AALGGSSKVAAVLLTYPFQVI), and 274–293 (GLTANLLKNVPASSITFIVY).

This sequence belongs to the mitochondrial carrier (TC 2.A.29) family. Ubiquitous.

Its subcellular location is the plastid. The protein resides in the chloroplast membrane. Its function is as follows. Mediates folate import into chloroplast. This is Folate transporter 1, chloroplastic (FOLT1) from Arabidopsis thaliana (Mouse-ear cress).